We begin with the raw amino-acid sequence, 170 residues long: Ribosome-binding factor A (170 aa).

The disordered stretch occupies residues 123–170; the sequence is AKAGVYAGDEDPYVKPRVIGEDEDDDDEEGDEDGDDVDRSAPGYEPAH. A compositionally biased stretch (acidic residues) spans 143-158; that stretch reads EDEDDDDEEGDEDGDD.

The protein belongs to the RbfA family. Monomer. Binds 30S ribosomal subunits, but not 50S ribosomal subunits or 70S ribosomes.

The protein localises to the cytoplasm. One of several proteins that assist in the late maturation steps of the functional core of the 30S ribosomal subunit. Associates with free 30S ribosomal subunits (but not with 30S subunits that are part of 70S ribosomes or polysomes). Required for efficient processing of 16S rRNA. May interact with the 5'-terminal helix region of 16S rRNA. The polypeptide is Ribosome-binding factor A (Clavibacter sepedonicus (Clavibacter michiganensis subsp. sepedonicus)).